The following is a 190-amino-acid chain: Thymidylate kinase (190 aa).

7–14 (GVDTCGKS) contacts ATP.

The protein belongs to the thymidylate kinase family.

The enzyme catalyses dTMP + ATP = dTDP + ADP. Functionally, phosphorylation of dTMP to form dTDP in both de novo and salvage pathways of dTTP synthesis. This Wolinella succinogenes (strain ATCC 29543 / DSM 1740 / CCUG 13145 / JCM 31913 / LMG 7466 / NCTC 11488 / FDC 602W) (Vibrio succinogenes) protein is Thymidylate kinase.